The following is a 154-amino-acid chain: D-aminoacyl-tRNA deacylase (154 aa).

The Gly-cisPro motif, important for rejection of L-amino acids signature appears at 137 to 138 (GP).

The protein belongs to the DTD family. Homodimer.

The protein localises to the cytoplasm. The enzyme catalyses glycyl-tRNA(Ala) + H2O = tRNA(Ala) + glycine + H(+). It catalyses the reaction a D-aminoacyl-tRNA + H2O = a tRNA + a D-alpha-amino acid + H(+). An aminoacyl-tRNA editing enzyme that deacylates mischarged D-aminoacyl-tRNAs. Also deacylates mischarged glycyl-tRNA(Ala), protecting cells against glycine mischarging by AlaRS. Acts via tRNA-based rather than protein-based catalysis; rejects L-amino acids rather than detecting D-amino acids in the active site. By recycling D-aminoacyl-tRNA to D-amino acids and free tRNA molecules, this enzyme counteracts the toxicity associated with the formation of D-aminoacyl-tRNA entities in vivo and helps enforce protein L-homochirality. In Thermomicrobium roseum (strain ATCC 27502 / DSM 5159 / P-2), this protein is D-aminoacyl-tRNA deacylase.